A 279-amino-acid chain; its full sequence is NADPH-dependent 7-cyano-7-deazaguanine reductase (279 aa).

Residue 86–88 (IES) participates in substrate binding. Residue 88–89 (SK) coordinates NADPH. The Thioimide intermediate role is filled by Cys187. The active-site Proton donor is the Asp194. Residue 226–227 (HE) participates in substrate binding. 255-256 (RG) is an NADPH binding site.

It belongs to the GTP cyclohydrolase I family. QueF type 2 subfamily. In terms of assembly, homodimer.

The protein resides in the cytoplasm. The enzyme catalyses 7-aminomethyl-7-carbaguanine + 2 NADP(+) = 7-cyano-7-deazaguanine + 2 NADPH + 3 H(+). Its pathway is tRNA modification; tRNA-queuosine biosynthesis. Its function is as follows. Catalyzes the NADPH-dependent reduction of 7-cyano-7-deazaguanine (preQ0) to 7-aminomethyl-7-deazaguanine (preQ1). This chain is NADPH-dependent 7-cyano-7-deazaguanine reductase, found in Actinobacillus pleuropneumoniae serotype 3 (strain JL03).